The following is a 636-amino-acid chain: Transcription termination factor FttA (636 aa).

A KHa region spans residues 4–72 (ELELKRIRDE…VVFRWNVDKR (69 aa)). Residues 73 to 140 (KDPAETKDYI…WQPKTIRTPP (68 aa)) are KHb. A metallo-beta-lactamase N-terminus region spans residues 181 to 383 (NIRMNALGGF…LLIEATYGGP (203 aa)). Zn(2+) is bound by residues His242, His244, Asp246, His247, His329, and Asp352. A beta-Casp region spans residues 384-577 (QDRIPSRQES…LKVFTLEGFS (194 aa)). The metallo-beta-lactamase C-terminus stretch occupies residues 578–636 (GHSSRSQISQFLRRIQPRPKVVIVNHGEESKCVSLSTMIHKKLRKSTKSPKNLEVVLLK). Zn(2+) is bound at residue His603.

This sequence belongs to the metallo-beta-lactamase superfamily. RNA-metabolizing metallo-beta-lactamase-like family. FttA subfamily. In terms of assembly, homodimer. Interacts with RNA polymerase (RNAP), interacts with the Spt4-Spt5 complex. It depends on Zn(2+) as a cofactor.

Functionally, terminates transcription on the whole genome. Termination is linked to FttA-mediated RNA cleavage and does not require NTP hydrolysis. Cleaves endonucleolytically at the RNA exit channel of RNA polymerase (RNAP); the 5'-3' exonuclease activity of this protein degrades the nascent RNA released from RNAP. Its function is as follows. Terminates transcription genome-wide in M.maripaludis. Restores wild-type growth to a strain of Methanococcus maripaludis depleted for this gene at 22 degrees Celsius and prevents transcriptional read-through. Transcription termination is most effective in vivo on RNAs with more than one U4-tract in their 3'-ends. Has endonuclease activity after U-rich tracts in transcription termination sequences. The protein is Transcription termination factor FttA of Lokiarchaeum sp. (strain GC14_75).